Consider the following 131-residue polypeptide: Period circadian protein (131 aa).

The segment at 29-109 (VTAPVELDPP…NSAGGASGGV (81 aa)) is disordered. The segment covering 71–93 (SGNFTTGSNVRMSSVTNTSNAGT) has biased composition (low complexity). Positions 94 to 109 (GTSGGGNSAGGASGGV) are enriched in gly residues.

Forms a heterodimer with timeless (TIM); the complex then translocates into the nucleus. In terms of processing, phosphorylated with a circadian rhythmicity, probably by the double-time protein (dbt). Phosphorylation could be implicated in the stability of per monomer and in the formation of heterodimer per-tim.

It is found in the nucleus. Its subcellular location is the cytoplasm. The protein localises to the perinuclear region. Its function is as follows. Essential for biological clock functions. Determines the period length of circadian and ultradian rhythms; an increase in PER dosage leads to shortened circadian rhythms and a decrease leads to lengthened circadian rhythms. Essential for the circadian rhythmicity of locomotor activity, eclosion behavior, and for the rhythmic component of the male courtship song that originates in the thoracic nervous system. The biological cycle depends on the rhythmic formation and nuclear localization of the TIM-PER complex. Light induces the degradation of TIM, which promotes elimination of PER. Nuclear activity of the heterodimer coordinatively regulates PER and TIM transcription through a negative feedback loop. Behaves as a negative element in circadian transcriptional loop. Does not appear to bind DNA, suggesting indirect transcriptional inhibition. This is Period circadian protein (per) from Zaprionus tuberculatus (Vinegar fly).